A 433-amino-acid chain; its full sequence is Probable non-inhibitory serpin-Z5 (433 aa).

Residues 1–12 (MEPKEKKQKLDT) show a composition bias toward basic and acidic residues. The interval 1-43 (MEPKEKKQKLDTSEVASPSLSKTHLKKKKTKKQKIRKSQEITS) is disordered. The span at 23–36 (THLKKKKTKKQKIR) shows a compositional bias: basic residues. The tract at residues 380 to 404 (GTEAVTFTAFRSAYLGCALVKPIDF) is RCL.

The protein belongs to the serpin family. Weakly expressed during seedling development.

This Arabidopsis thaliana (Mouse-ear cress) protein is Probable non-inhibitory serpin-Z5.